We begin with the raw amino-acid sequence, 147 residues long: Probable cytidine deaminase (147 aa).

In terms of domain architecture, CMP/dCMP-type deaminase spans 4 to 130 (EELEKCIDAA…KLLPGLFSQE (127 aa)). Residue 45–51 (NVENSSY) coordinates substrate. Cys56 serves as a coordination point for Zn(2+). Glu58 (proton donor) is an active-site residue. Zn(2+) contacts are provided by Cys90 and Cys93.

The protein belongs to the cytidine and deoxycytidylate deaminase family. It depends on Zn(2+) as a cofactor.

The enzyme catalyses cytidine + H2O + H(+) = uridine + NH4(+). It carries out the reaction 2'-deoxycytidine + H2O + H(+) = 2'-deoxyuridine + NH4(+). Functionally, this enzyme scavenges exogenous and endogenous cytidine and 2'-deoxycytidine for UMP synthesis. This chain is Probable cytidine deaminase (cda), found in Dictyostelium discoideum (Social amoeba).